The following is a 139-amino-acid chain: ATP synthase epsilon chain (139 aa).

The protein belongs to the ATPase epsilon chain family. F-type ATPases have 2 components, CF(1) - the catalytic core - and CF(0) - the membrane proton channel. CF(1) has five subunits: alpha(3), beta(3), gamma(1), delta(1), epsilon(1). CF(0) has three main subunits: a, b and c.

It localises to the cell inner membrane. In terms of biological role, produces ATP from ADP in the presence of a proton gradient across the membrane. The chain is ATP synthase epsilon chain from Serratia proteamaculans (strain 568).